Here is a 405-residue protein sequence, read N- to C-terminus: Magnesium-protoporphyrin IX monomethyl ester [oxidative] cyclase, chloroplastic (405 aa).

A chloroplast-targeting transit peptide spans M1–T44. Residues M33–K47 are compositionally biased toward low complexity. The segment at M33–K54 is disordered.

This sequence belongs to the AcsF family. Fe cation is required as a cofactor.

It is found in the plastid. It localises to the chloroplast. The enzyme catalyses Mg-protoporphyrin IX 13-monomethyl ester + 3 NADPH + 3 O2 + 2 H(+) = 3,8-divinyl protochlorophyllide a + 3 NADP(+) + 5 H2O. It functions in the pathway porphyrin-containing compound metabolism; chlorophyll biosynthesis. In terms of biological role, catalyzes the formation of the isocyclic ring in chlorophyll biosynthesis. Mediates the cyclase reaction, which results in the formation of divinylprotochlorophyllide (Pchlide) characteristic of all chlorophylls from magnesium-protoporphyrin IX 13-monomethyl ester (MgPMME). This Euphorbia esula (Leafy spurge) protein is Magnesium-protoporphyrin IX monomethyl ester [oxidative] cyclase, chloroplastic (CRD1).